A 314-amino-acid polypeptide reads, in one-letter code: Small ribosomal subunit protein uS2 (314 aa).

Composition is skewed to basic and acidic residues over residues 244–265 (GGHD…GHKD) and 271–287 (DRRG…EDRA). The segment at 244–314 (GGHDERREQE…AAPEAAPAKE (71 aa)) is disordered. Residues 302–314 (APAAAPEAAPAKE) show a composition bias toward low complexity.

Belongs to the universal ribosomal protein uS2 family.

The polypeptide is Small ribosomal subunit protein uS2 (Anaeromyxobacter dehalogenans (strain 2CP-C)).